Reading from the N-terminus, the 308-residue chain is Protein FdhE homolog (308 aa).

Belongs to the FdhE family.

Its subcellular location is the cytoplasm. In terms of biological role, necessary for formate dehydrogenase activity. This is Protein FdhE homolog from Edwardsiella ictaluri (strain 93-146).